A 363-amino-acid chain; its full sequence is Ethanol acetyltransferase 1 (363 aa).

The N-terminal 19 residues, 1-19 (MLLAYTVRPSNWSFTRRAY), are a transit peptide targeting the mitochondrion. The AB hydrolase-1 domain occupies 65 to 164 (PIIFYHGLLG…FSAACIIDNS (100 aa)). Active-site charge relay system residues include Ser-138, Asp-162, and His-313.

It belongs to the AB hydrolase superfamily.

The protein resides in the mitochondrion. It catalyses the reaction ethanol + acetyl-CoA = ethyl acetate + CoA. The enzyme catalyses acetyl-CoA + H2O = acetate + CoA + H(+). The catalysed reaction is ethyl acetate + H2O = ethanol + acetate + H(+). In terms of biological role, alcohol acetyltransferase that catalyzes the synthesis of ethyl acetate from ethanol and acetyl-CoA. Can also function as a thioesterase by hydrolyzing acetyl-CoA in the absence of ethanol, as well as esterase hydrolyzing ethyl acetate. This Kluyveromyces marxianus (strain DMKU3-1042 / BCC 29191 / NBRC 104275) (Yeast) protein is Ethanol acetyltransferase 1 (EAT1).